The sequence spans 852 residues: Bifunctional uridylyltransferase/uridylyl-removing enzyme (852 aa).

The tract at residues 1–318 is uridylyltransferase; the sequence is MPANLSSALE…SAPMRVTLRI (318 aa). A uridylyl-removing region spans residues 319–672; the sequence is DDDYIQVNNQ…SRILFKSDSF (354 aa). The region spanning 436 to 558 is the HD domain; the sequence is VDDHILTVVR…VQTHERLSAL (123 aa). ACT domains are found at residues 673-757 and 785-852; these read QVMV…SHSR and SVEI…EQLS.

It belongs to the GlnD family. Mg(2+) is required as a cofactor.

It carries out the reaction [protein-PII]-L-tyrosine + UTP = [protein-PII]-uridylyl-L-tyrosine + diphosphate. The catalysed reaction is [protein-PII]-uridylyl-L-tyrosine + H2O = [protein-PII]-L-tyrosine + UMP + H(+). Its activity is regulated as follows. Uridylyltransferase (UTase) activity is inhibited by glutamine, while glutamine activates uridylyl-removing (UR) activity. Modifies, by uridylylation and deuridylylation, the PII regulatory proteins (GlnB and homologs), in response to the nitrogen status of the cell that GlnD senses through the glutamine level. Under low glutamine levels, catalyzes the conversion of the PII proteins and UTP to PII-UMP and PPi, while under higher glutamine levels, GlnD hydrolyzes PII-UMP to PII and UMP (deuridylylation). Thus, controls uridylylation state and activity of the PII proteins, and plays an important role in the regulation of nitrogen assimilation and metabolism. This is Bifunctional uridylyltransferase/uridylyl-removing enzyme from Neisseria meningitidis serogroup A / serotype 4A (strain DSM 15465 / Z2491).